The sequence spans 607 residues: Guanine nucleotide-binding protein-like 1 (607 aa).

The segment covering 1-14 has biased composition (basic residues); that stretch reads MPRKKPFSVKQKKK. Positions 1 to 81 are disordered; it reads MPRKKPFSVK…GPRGYDPNRY (81 aa). Positions 15-26 are enriched in basic and acidic residues; sequence QLQDKRERKRGL. 3 positions are modified to phosphoserine: S32, S33, and S34. Phosphothreonine is present on residues T48 and T50. Phosphoserine is present on residues S51 and S68. The CP-type G domain maps to 178-418; the sequence is WRQLWRVLEM…LCDCPGLIFP (241 aa). Residue 225-228 coordinates GTP; that stretch reads NKVD. A Phosphoserine modification is found at S324. Residues 367–374 and 411–415 contribute to the GTP site; these read GFPNVGKS and DCPGL. Residues 544–607 form a disordered region; it reads GRVGPAGDEE…PYALLGEGEC (64 aa). Acidic residues predominate over residues 550–585; sequence GDEEEEEEEELSSSCEEEGEEDRDADEEGEGDEDTP. Phosphoserine occurs at positions 561, 562, and 563.

This sequence belongs to the TRAFAC class YlqF/YawG GTPase family.

In terms of biological role, possible regulatory or functional link with the histocompatibility cluster. This Rattus norvegicus (Rat) protein is Guanine nucleotide-binding protein-like 1 (Gnl1).